Consider the following 288-residue polypeptide: Homoserine kinase (288 aa).

79–89 (PPARGLGSSSA) serves as a coordination point for ATP.

Belongs to the GHMP kinase family. Homoserine kinase subfamily.

The protein resides in the cytoplasm. The catalysed reaction is L-homoserine + ATP = O-phospho-L-homoserine + ADP + H(+). Its pathway is amino-acid biosynthesis; L-threonine biosynthesis; L-threonine from L-aspartate: step 4/5. Catalyzes the ATP-dependent phosphorylation of L-homoserine to L-homoserine phosphate. The polypeptide is Homoserine kinase (Listeria innocua serovar 6a (strain ATCC BAA-680 / CLIP 11262)).